The chain runs to 121 residues: Glycine cleavage system H protein (121 aa).

Residues 16-98 (VATVGITAYA…ESGGWFAKIK (83 aa)) form the Lipoyl-binding domain. K57 carries the N6-lipoyllysine modification.

Belongs to the GcvH family. The glycine cleavage system is composed of four proteins: P, T, L and H. (R)-lipoate serves as cofactor.

In terms of biological role, the glycine cleavage system catalyzes the degradation of glycine. The H protein shuttles the methylamine group of glycine from the P protein to the T protein. This is Glycine cleavage system H protein from Caulobacter vibrioides (strain NA1000 / CB15N) (Caulobacter crescentus).